A 464-amino-acid chain; its full sequence is UDP-N-acetylmuramoylalanine--D-glutamate ligase (464 aa).

Residue 127–133 (GSNGKST) participates in ATP binding.

The protein belongs to the MurCDEF family.

The protein resides in the cytoplasm. The catalysed reaction is UDP-N-acetyl-alpha-D-muramoyl-L-alanine + D-glutamate + ATP = UDP-N-acetyl-alpha-D-muramoyl-L-alanyl-D-glutamate + ADP + phosphate + H(+). It functions in the pathway cell wall biogenesis; peptidoglycan biosynthesis. Functionally, cell wall formation. Catalyzes the addition of glutamate to the nucleotide precursor UDP-N-acetylmuramoyl-L-alanine (UMA). The sequence is that of UDP-N-acetylmuramoylalanine--D-glutamate ligase from Roseobacter denitrificans (strain ATCC 33942 / OCh 114) (Erythrobacter sp. (strain OCh 114)).